We begin with the raw amino-acid sequence, 109 residues long: MKLSIIIIATSLVIAVVAFPSKDSKAIENDKTEQRMEIVVQETARACSKQIGNKCKRNCECCGKTVVCGTIYVGGKEVNQCMDKTSDNAILNGLGKGMNFIENTFSFCV.

The signal sequence occupies residues 1–18; it reads MKLSIIIIATSLVIAVVA. Positions 19 to 46 are excised as a propeptide; the sequence is FPSKDSKAIENDKTEQRMEIVVQETARA. 4 disulfides stabilise this stretch: Cys-47-Cys-62, Cys-55-Cys-68, Cys-59-Cys-108, and Cys-61-Cys-81.

This sequence belongs to the neurotoxin 25 family. F7 subfamily. In terms of tissue distribution, expressed by the venom gland.

It is found in the secreted. In terms of biological role, putative ion channel inhibitor. This is Hainantoxin-XVIII-5 from Cyriopagopus hainanus (Chinese bird spider).